The chain runs to 624 residues: (-)-beta-phellandrene synthase 1, chloroplastic (624 aa).

The N-terminal 48 residues, 1 to 48 (MAIVSSVPLASKSCLHKSLISSIHKLKPFCRTIPTLGMSRPGKYVMPS), are a transit peptide targeting the chloroplast. 3 residues coordinate Mg(2+): Asp-375, Asp-379, and Asp-527. A DDXXD motif motif is present at residues 375–379 (DDMYD).

This sequence belongs to the terpene synthase family. Tpsd subfamily. Mg(2+) serves as cofactor. Mn(2+) is required as a cofactor.

Its subcellular location is the plastid. It is found in the chloroplast. The catalysed reaction is (2E)-geranyl diphosphate = (-)-beta-phellandrene + diphosphate. It participates in terpene metabolism; oleoresin biosynthesis. In terms of biological role, terpene synthase (TPS) involved in the biosynthesis of monoterpene natural products included in conifer oleoresin secretions and volatile emissions; these compounds contribute to biotic and abiotic stress defense against herbivores and pathogens. Catalyzes the conversion of (2E)-geranyl diphosphate (GPP) to (-)-beta-phellandrene. The protein is (-)-beta-phellandrene synthase 1, chloroplastic of Picea sitchensis (Sitka spruce).